A 147-amino-acid chain; its full sequence is Hemoglobin subunit epsilon (147 aa).

One can recognise a Globin domain in the interval 3–147 (HFTAEEKAAI…VAIALGHKYH (145 aa)). A phosphoserine mark is found at serine 14 and serine 51. Residues histidine 64 and histidine 93 each coordinate heme b.

This sequence belongs to the globin family. In terms of assembly, heterotetramer of two alpha chains and two epsilon chains in early embryonic hemoglobin Gower-2; two zeta chains and two epsilon chains in early embryonic hemoglobin Gower-1. In terms of tissue distribution, red blood cells.

The epsilon chain is a beta-type chain of early mammalian embryonic hemoglobin. This Lagothrix lagotricha (Brown woolly monkey) protein is Hemoglobin subunit epsilon (HBE1).